We begin with the raw amino-acid sequence, 239 residues long: SH3 domain-binding glutamic acid-rich protein (239 aa).

An SH3-binding motif is present at residues 124-130 (NGIPLPP). The segment at 159–239 (GLAPPPDSKG…GEEPGEDEDS (81 aa)) is disordered. The span at 167–185 (KGSEKAEEGGETEAQKEGS) shows a compositional bias: basic and acidic residues. Residues 198–239 (NEEEGETATEETEEIAMEGAEGEAEEEEETAEGEEPGEDEDS) show a composition bias toward acidic residues.

Belongs to the SH3BGR family. As to expression, expressed in heart and skeletal muscle.

In Homo sapiens (Human), this protein is SH3 domain-binding glutamic acid-rich protein (SH3BGR).